Consider the following 102-residue polypeptide: MCQTMRCILVACVALALLAAGCRVEASNSRPPRKNDVNTMADAYKFLQDLDTYYGDRARVRFGKRGSLMDILRNHEMDNINLGKNANNGGEFARGFNEEEIF.

The N-terminal stretch at 1 to 26 (MCQTMRCILVACVALALLAAGCRVEA) is a signal peptide. Positions 27 to 32 (SNSRPP) are excised as a propeptide. Phe62 carries the phenylalanine amide modification. Residues 66 to 102 (GSLMDILRNHEMDNINLGKNANNGGEFARGFNEEEIF) constitute a propeptide that is removed on maturation.

The protein belongs to the NPY family. In terms of tissue distribution, expressed in midgut, brain lobes and ventral nerve cord of larvae. Predominantly expressed in two pairs of protocerebral neurons in the larval CNS (at protein level). Intense expression is also seen in the fan-shaped body of the central complex and two lateral areas of the lower part of the central brain that appear to harbor the giant commissural interneurons of the giant fiber pathway (at protein level). Upon glucose feeding, two additional dNPFergic neurons are consistently detected on the ventromedial surface of the subesophageal ganglion (SEG) of third instars larvae. Expressed in a subset of sugar-responsive PAIN neurons in the thoracic body but is absent from other peripheral PAIN neurons.

It localises to the secreted. In terms of biological role, integral part of the sensory system that mediates food signaling, providing the neural basis for the regulation of food response; coordinates larval foraging and social behavior changes during development. Required in dopaminergic (DA) neurons that innervate the mushroom body for satiety to suppress appetitive memory performance; a key factor in the internal state of hunger in the brain. NPF neurons coordinately modulate diverse sensory and motor neurons important for feeding, flight, and locomotion. NPF/NPFR pathway exerts its suppressive effect on larval aversion to diverse stressful stimuli (chemical stress and noxious heat) through attenuation of TRP channel-induced neuronal excitation. NPF neural signaling system plays a physiological role in acute modulation of alcohol sensitivity in adults, rather than a general response to intoxication by sedative agents. Activation and inhibition of the NPF system reduces and enhances ethanol preference, respectively. Sexual experience, the NPF system activity and ethanol consumption are all linked; sexual deprivation is a major contributor to enhanced ethanol preference. The protein is Neuropeptide F (NPF) of Drosophila melanogaster (Fruit fly).